We begin with the raw amino-acid sequence, 362 residues long: L-asparaginase 2-1 (362 aa).

Residues 1–25 (MRSLNTLLLSLFVAMSSGAPLLKIR) form the signal peptide. N-linked (GlcNAc...) asparagine glycosylation is present at Asn-29. Positions 33 to 359 (PSIKIFGTGG…DQIRSVFSGV (327 aa)) constitute an Asparaginase/glutaminase domain. Catalysis depends on Thr-43, which acts as the O-isoaspartyl threonine intermediate. Ser-89 serves as a coordination point for substrate. N-linked (GlcNAc...) asparagine glycosylation occurs at Asn-93. 122-123 (TD) serves as a coordination point for substrate. A glycan (N-linked (GlcNAc...) asparagine) is linked at Asn-239.

The protein belongs to the asparaginase 1 family.

The protein resides in the secreted. Its subcellular location is the periplasm. It carries out the reaction L-asparagine + H2O = L-aspartate + NH4(+). This chain is L-asparaginase 2-1 (ASP3-1), found in Saccharomyces cerevisiae (strain ATCC 204508 / S288c) (Baker's yeast).